Here is a 1079-residue protein sequence, read N- to C-terminus: Zn(2)-C6 fungal-type transcription factor FTF1a (1079 aa).

Residues 177–204 constitute a DNA-binding region (zn(2)-C6 fungal-type); it reads CIACRRKKIRCSGEKPACKQCLHSCIPC.

Its subcellular location is the nucleus. In terms of biological role, zn(2)-C6 fungal-type transcription factor that has a role in the establishment of the fungus within the plant and/or the progress of the disease. Regulates the expression of virulence factors such as SIX1 and SIX6. The chain is Zn(2)-C6 fungal-type transcription factor FTF1a from Fusarium oxysporum f. sp. lycopersici (strain 4287 / CBS 123668 / FGSC 9935 / NRRL 34936) (Fusarium vascular wilt of tomato).